The sequence spans 412 residues: Potassium channel, subfamily K, member 13 (412 aa).

At 1 to 21 (MACRSGCCCNSIGSFNEDNAR) the chain is on the cytoplasmic side. Residues 22–42 (FLMLALLIIIYLLCGAAVFSA) traverse the membrane as a helical segment. The segment at residues 97-117 (WDFAGAFYFVGTVVSTIGFGM) is an intramembrane region (pore-forming). The K(+) site is built by threonine 112, isoleucine 113, and glycine 114. The interval 112–117 (TIGFGM) is selectivity filter 1. A helical transmembrane segment spans residues 127–147 (IFLIFYGLIGCAATILFFNLF). Over 148–198 (LERVITVIAFVLKFCHERRESRKAGPTQNCRRPSTDNRDRRTDSLAGWKPS) the chain is Cytoplasmic. The helical transmembrane segment at 199–219 (VYCVMLILGVAAILVSCCASA) threads the bilayer. The segment at residues 229–249 (YLDALYFCFVAFSTIGFGDMV) is an intramembrane region (pore-forming). Residues threonine 242, isoleucine 243, glycine 244, and phenylalanine 245 each contribute to the K(+) site. The tract at residues 242–247 (TIGFGD) is selectivity filter 2. The helical transmembrane segment at 268-288 (LFILTGVCCIYSLFNVISIVI) threads the bilayer. The Cytoplasmic segment spans residues 289–412 (KQVLNWLLRR…NRLAETSVDR (124 aa)). Over residues 374 to 386 (MANGHPRQSGSSS) the composition is skewed to polar residues. The tract at residues 374–395 (MANGHPRQSGSSSRHNEFSGGV) is disordered.

The protein belongs to the two pore domain potassium channel (TC 1.A.1.8) family. Homodimer. Heterodimer. Brain and heart.

The protein localises to the cell membrane. The catalysed reaction is K(+)(in) = K(+)(out). The channel conductance is activated by arachidonic acid and inhibited by Ba(2+) ions, volatile anesthetics such as halothane and antiarrhythmic drug mexiletine. Insensitive to extracellular pH change. Its function is as follows. K(+) channel that conducts outward rectifying tonic currents potentiated by purinergic signals. Homo- and heterodimerizes to form functional channels with distinct regulatory and gating properties. Contributes most of K(+) currents at the plasma membrane of resting microglia. Maintains a depolarized membrane potential required for proper ramified microglia morphology and phagocytosis, selectively mediating microglial pruning of presynaptic compartments at hippocampal excitatory synapses. Upon local release of ATP caused by neuronal injury or infection, it is potentiated by purinergic signaling and contributes to ATP-triggered K(+) efflux underlying microglial NLRP3 inflammasome assembly and IL1B release. The sequence is that of Potassium channel, subfamily K, member 13 from Danio rerio (Zebrafish).